Consider the following 827-residue polypeptide: Leucine--tRNA ligase (827 aa).

A 'HIGH' region motif is present at residues 46–56 (PYPSGRIHMGH). Positions 585 to 589 (KMSKS) match the 'KMSKS' region motif. Lys588 provides a ligand contact to ATP.

This sequence belongs to the class-I aminoacyl-tRNA synthetase family.

Its subcellular location is the cytoplasm. The enzyme catalyses tRNA(Leu) + L-leucine + ATP = L-leucyl-tRNA(Leu) + AMP + diphosphate. The chain is Leucine--tRNA ligase from Desulfotalea psychrophila (strain LSv54 / DSM 12343).